A 394-amino-acid polypeptide reads, in one-letter code: Acetate kinase (394 aa).

Position 8 (asparagine 8) interacts with Mg(2+). Lysine 15 is a binding site for ATP. Arginine 86 serves as a coordination point for substrate. Aspartate 143 acts as the Proton donor/acceptor in catalysis. Residues 201–205 (HLGNG), 276–278 (DCR), and 324–328 (GIGEN) contribute to the ATP site. Position 378 (glutamate 378) interacts with Mg(2+).

This sequence belongs to the acetokinase family. As to quaternary structure, homodimer. Mg(2+) is required as a cofactor. Requires Mn(2+) as cofactor.

The protein resides in the cytoplasm. The enzyme catalyses acetate + ATP = acetyl phosphate + ADP. It functions in the pathway metabolic intermediate biosynthesis; acetyl-CoA biosynthesis; acetyl-CoA from acetate: step 1/2. Functionally, catalyzes the formation of acetyl phosphate from acetate and ATP. Can also catalyze the reverse reaction. In Dichelobacter nodosus (strain VCS1703A), this protein is Acetate kinase.